The primary structure comprises 367 residues: dTDP-4-amino-4,6-dideoxy-D-glucose transaminase (367 aa).

Position 184 is an N6-(pyridoxal phosphate)lysine (Lys-184).

This sequence belongs to the DegT/DnrJ/EryC1 family. Pyridoxal 5'-phosphate is required as a cofactor.

It carries out the reaction dTDP-4-amino-4,6-dideoxy-D-glucose + 2-oxoglutarate = dTDP-4-dehydro-6-deoxy-alpha-D-glucose + L-glutamate. It participates in bacterial outer membrane biogenesis; lipopolysaccharide biosynthesis. Functionally, catalyzes the conversion of dTDP-4-dehydro-6-deoxy-D-glucose (dTDP-D-Glc4O) to dTDP-4-amino-4,6-dideoxy-D-glucose (dTDP-D-Qui4N). L-glutamine can also be used as amino donor. The chain is dTDP-4-amino-4,6-dideoxy-D-glucose transaminase (vioA) from Shigella dysenteriae.